The chain runs to 436 residues: Peptidase B (436 aa).

2 residues coordinate Mn(2+): K201 and D206. The active site involves K213. Residues D224, D283, and E285 each contribute to the Mn(2+) site. R287 is a catalytic residue.

Belongs to the peptidase M17 family. Homohexamer. It depends on Mn(2+) as a cofactor.

It localises to the cytoplasm. The catalysed reaction is Release of an N-terminal amino acid, Xaa, from a peptide or arylamide. Xaa is preferably Glu or Asp but may be other amino acids, including Leu, Met, His, Cys and Gln.. Probably plays an important role in intracellular peptide degradation. This Pectobacterium carotovorum subsp. carotovorum (strain PC1) protein is Peptidase B.